A 274-amino-acid chain; its full sequence is Pyrroline-5-carboxylate reductase 3 (274 aa).

The protein belongs to the pyrroline-5-carboxylate reductase family. In terms of assembly, homodecamer; composed of 5 homodimers.

Its subcellular location is the cytoplasm. The enzyme catalyses L-proline + NADP(+) = (S)-1-pyrroline-5-carboxylate + NADPH + 2 H(+). It catalyses the reaction L-proline + NAD(+) = (S)-1-pyrroline-5-carboxylate + NADH + 2 H(+). The protein operates within amino-acid biosynthesis; L-proline biosynthesis; L-proline from L-glutamate 5-semialdehyde: step 1/1. Functionally, oxidoreductase that catalyzes the last step in proline biosynthesis, which corresponds to the reduction of pyrroline-5-carboxylate (P5C) to L-proline using NAD(P)H. Proline is synthesized from either glutamate or ornithine; both are converted to P5C, and then to proline via pyrroline-5-carboxylate reductases (PYCRs). PYCR3 is exclusively linked to the biosynthesis of proline from ornithine. This chain is Pyrroline-5-carboxylate reductase 3, found in Xenopus laevis (African clawed frog).